Reading from the N-terminus, the 171-residue chain is MANPRNEAALAELKARFAETDTVVLTEYRGLTVAQTTELRKALGFDVQYSVAKNTLVKIAANEAGVEGLDDLLTGPTAVAFIKGEAVDTAKVLKKFGEENKAFVVKGGYMDGNALTAEQVNAIAELDNRETTLAKLAGAMKGSLAKAAGLFNAPASQVARLAVALQDKKDA.

The protein belongs to the universal ribosomal protein uL10 family. Part of the ribosomal stalk of the 50S ribosomal subunit. The N-terminus interacts with L11 and the large rRNA to form the base of the stalk. The C-terminus forms an elongated spine to which L12 dimers bind in a sequential fashion forming a multimeric L10(L12)X complex.

Forms part of the ribosomal stalk, playing a central role in the interaction of the ribosome with GTP-bound translation factors. In Corynebacterium glutamicum (strain ATCC 13032 / DSM 20300 / JCM 1318 / BCRC 11384 / CCUG 27702 / LMG 3730 / NBRC 12168 / NCIMB 10025 / NRRL B-2784 / 534), this protein is Large ribosomal subunit protein uL10.